The primary structure comprises 152 residues: Phosphoribosyl-AMP cyclohydrolase (152 aa).

A Mg(2+)-binding site is contributed by aspartate 92. Zn(2+) is bound at residue cysteine 93. Residues aspartate 94 and aspartate 96 each coordinate Mg(2+). The Zn(2+) site is built by cysteine 111 and cysteine 118.

The protein belongs to the PRA-CH family. As to quaternary structure, homodimer. Mg(2+) serves as cofactor. The cofactor is Zn(2+).

The protein resides in the cytoplasm. The enzyme catalyses 1-(5-phospho-beta-D-ribosyl)-5'-AMP + H2O = 1-(5-phospho-beta-D-ribosyl)-5-[(5-phospho-beta-D-ribosylamino)methylideneamino]imidazole-4-carboxamide. The protein operates within amino-acid biosynthesis; L-histidine biosynthesis; L-histidine from 5-phospho-alpha-D-ribose 1-diphosphate: step 3/9. In terms of biological role, catalyzes the hydrolysis of the adenine ring of phosphoribosyl-AMP. This is Phosphoribosyl-AMP cyclohydrolase from Sinorhizobium fredii (strain NBRC 101917 / NGR234).